A 470-amino-acid polypeptide reads, in one-letter code: DNA primase large subunit (470 aa).

Residues Cys-279, Cys-358, Cys-376, and Cys-414 each coordinate [4Fe-4S] cluster. The disordered stretch occupies residues 449-470 (EEKKSAKQSNNKENENQSIDEK).

Belongs to the eukaryotic-type primase large subunit family. In terms of assembly, heterodimer of a small subunit and a large subunit. The cofactor is [4Fe-4S] cluster.

Its function is as follows. DNA primase is the polymerase that synthesizes small RNA primers for the Okazaki fragments made during discontinuous DNA replication. The polypeptide is DNA primase large subunit (prim2) (Dictyostelium discoideum (Social amoeba)).